Reading from the N-terminus, the 153-residue chain is Ribosome maturation factor RimP (153 aa).

Belongs to the RimP family.

It is found in the cytoplasm. In terms of biological role, required for maturation of 30S ribosomal subunits. This chain is Ribosome maturation factor RimP, found in Psychromonas ingrahamii (strain DSM 17664 / CCUG 51855 / 37).